Reading from the N-terminus, the 247-residue chain is Adenosylcobinamide-GDP ribazoletransferase (247 aa).

The next 5 helical transmembrane spans lie at 34 to 54 (IITFPLIGLLLGAISGLVFMV), 57 to 77 (AWCGAPLAALFSVLVLALMTG), 113 to 133 (GGLALIFVVLAKILVLSELAL), 138 to 158 (ILASLAAACAVSRGTAALLMY), and 194 to 214 (VLLLGMHGVAAMVVTMVAIFI).

The protein belongs to the CobS family. Mg(2+) is required as a cofactor.

It is found in the cell inner membrane. It catalyses the reaction alpha-ribazole + adenosylcob(III)inamide-GDP = adenosylcob(III)alamin + GMP + H(+). The enzyme catalyses alpha-ribazole 5'-phosphate + adenosylcob(III)inamide-GDP = adenosylcob(III)alamin 5'-phosphate + GMP + H(+). The protein operates within cofactor biosynthesis; adenosylcobalamin biosynthesis; adenosylcobalamin from cob(II)yrinate a,c-diamide: step 7/7. Joins adenosylcobinamide-GDP and alpha-ribazole to generate adenosylcobalamin (Ado-cobalamin). Also synthesizes adenosylcobalamin 5'-phosphate from adenosylcobinamide-GDP and alpha-ribazole 5'-phosphate. The polypeptide is Adenosylcobinamide-GDP ribazoletransferase (Shigella flexneri).